The sequence spans 361 residues: dTDP-glucose 4,6-dehydratase (361 aa).

Residues Phe11–Ile12, Asp32–Thr35, Asp58–Ile59, Leu80–Ser84, and Thr99 each bind NAD(+). Ser84 is a substrate binding site. A substrate-binding site is contributed by Thr133. Catalysis depends on Asp134, which acts as the Proton donor. Active-site proton acceptor residues include Glu135 and Tyr167. Tyr167–Lys171 is a binding site for NAD(+). Asn196 serves as a coordination point for substrate. Residue Asn197 coordinates NAD(+). Residues Lys206–Leu207, Pro222–Tyr224, Arg231, Asn266, Asp296–His300, and Tyr357 each bind substrate.

Belongs to the NAD(P)-dependent epimerase/dehydratase family. dTDP-glucose dehydratase subfamily. Homodimer. Requires NAD(+) as cofactor.

The catalysed reaction is dTDP-alpha-D-glucose = dTDP-4-dehydro-6-deoxy-alpha-D-glucose + H2O. The protein operates within carbohydrate biosynthesis; dTDP-L-rhamnose biosynthesis. Its pathway is bacterial outer membrane biogenesis; LPS O-antigen biosynthesis. Catalyzes the dehydration of dTDP-D-glucose to form dTDP-6-deoxy-D-xylo-4-hexulose via a three-step process involving oxidation, dehydration and reduction. This is dTDP-glucose 4,6-dehydratase from Salmonella typhimurium (strain LT2 / SGSC1412 / ATCC 700720).